The chain runs to 105 residues: Large ribosomal subunit protein uL18c (105 aa).

The protein belongs to the universal ribosomal protein uL18 family. In terms of assembly, part of the 50S ribosomal subunit; contacts the 5S rRNA.

The protein localises to the plastid. It is found in the chloroplast. Its function is as follows. Binds 5S rRNA, forms part of the central protuberance of the 50S subunit. In Cyanidium caldarium (Red alga), this protein is Large ribosomal subunit protein uL18c (rpl18).